The chain runs to 555 residues: MTRYIFITGGVVSSLGKGITSASLGAILEAQGLTVTLLKLDPYINVDPGTMSPFQHGEVFVTEDGAETDLDLGHYERFVNATMTRKNNFTTGRVYADVIRKERRGDYLGGTIQVIPHITDEIKAKIREGADGADVALVEVGGTVGDIESLPFLEAIRQMRIELGDQQTLFIHLTLVPYVAVAGEIKTKPTQHSVKELRSIGIQPDILVCRSEQSLPDAERAKIALFTNVPEPSVISLSDVKSIYEIPLILRDQGLGNRVCEKLNIKATAADLDDWKKVVQAQKNPRHTVTVAVVGKYVDLEDSYKSLSEALIHAGIHTQTRVVIEYIDSEAIELHGTELLKKVDAILVPGGFGSRGIEGKILAAQYARENGIPYFGICLGMQIAIIEFARDKAQMENANSTEFDPKTPFPVVALVSEWMAKEGIIEKRKWGDDLGGTMRLGGQPCRLKIDSLARRLYGEDRVIERHRHRYEVNNDLIGELEKKGLVISGRSIDDRLVEMIELADHPWFVGCQFHPEFTSTPRKGHPLFIGFIKAGLAAKEAKKAVLAAPSQEKTD.

Residues 1-265 (MTRYIFITGG…GNRVCEKLNI (265 aa)) are amidoligase domain. Position 13 (Ser13) interacts with CTP. Position 13 (Ser13) interacts with UTP. ATP-binding positions include 14–19 (SLGKGI) and Asp71. Residues Asp71 and Glu139 each coordinate Mg(2+). CTP is bound by residues 146-148 (DIE), 186-191 (KTKPTQ), and Lys222. UTP-binding positions include 186 to 191 (KTKPTQ) and Lys222. One can recognise a Glutamine amidotransferase type-1 domain in the interval 290 to 541 (TVAVVGKYVD…IKAGLAAKEA (252 aa)). Gly351 is a binding site for L-glutamine. Cys378 serves as the catalytic Nucleophile; for glutamine hydrolysis. Residues 379-382 (LGMQ), Glu402, and Arg469 each bind L-glutamine. Residues His514 and Glu516 contribute to the active site.

Belongs to the CTP synthase family. Homotetramer.

It catalyses the reaction UTP + L-glutamine + ATP + H2O = CTP + L-glutamate + ADP + phosphate + 2 H(+). The catalysed reaction is L-glutamine + H2O = L-glutamate + NH4(+). The enzyme catalyses UTP + NH4(+) + ATP = CTP + ADP + phosphate + 2 H(+). It participates in pyrimidine metabolism; CTP biosynthesis via de novo pathway; CTP from UDP: step 2/2. Its activity is regulated as follows. Allosterically activated by GTP, when glutamine is the substrate; GTP has no effect on the reaction when ammonia is the substrate. The allosteric effector GTP functions by stabilizing the protein conformation that binds the tetrahedral intermediate(s) formed during glutamine hydrolysis. Inhibited by the product CTP, via allosteric rather than competitive inhibition. In terms of biological role, catalyzes the ATP-dependent amination of UTP to CTP with either L-glutamine or ammonia as the source of nitrogen. Regulates intracellular CTP levels through interactions with the four ribonucleotide triphosphates. This chain is CTP synthase, found in Coxiella burnetii (strain RSA 331 / Henzerling II).